Consider the following 907-residue polypeptide: NADH-quinone oxidoreductase subunit G (907 aa).

A 2Fe-2S ferredoxin-type domain is found at 1-83 (MTIIFVDNEE…GMIVSTSDKI (83 aa)). Cys34, Cys45, Cys48, and Cys67 together coordinate [2Fe-2S] cluster. Residues 83–122 (ISRNFRKGIIELLMLNHPHDCPICEEGGSCHLQDMTVMAG) form the 4Fe-4S His(Cys)3-ligated-type domain. Residues His99, Cys103, Cys106, Cys112, Cys151, Cys154, Cys157, Cys201, Cys228, Cys231, Cys235, and Cys263 each coordinate [4Fe-4S] cluster. The 4Fe-4S Mo/W bis-MGD-type domain maps to 221–277 (MQYAPSICQHCCVGCNISVGEKYGKISRIENRYHNAINHYFLCDLGRFSYDYSNVDE).

This sequence belongs to the complex I 75 kDa subunit family. In terms of assembly, composed of 13 different subunits. Subunits NuoCD, E, F, and G constitute the peripheral sector of the complex. It depends on [2Fe-2S] cluster as a cofactor. Requires [4Fe-4S] cluster as cofactor.

The enzyme catalyses a quinone + NADH + 5 H(+)(in) = a quinol + NAD(+) + 4 H(+)(out). Its function is as follows. NDH-1 shuttles electrons from NADH, via FMN and iron-sulfur (Fe-S) centers, to quinones in the respiratory chain. Couples the redox reaction to proton translocation (for every two electrons transferred, four hydrogen ions are translocated across the cytoplasmic membrane), and thus conserves the redox energy in a proton gradient. This Buchnera aphidicola subsp. Baizongia pistaciae (strain Bp) protein is NADH-quinone oxidoreductase subunit G (nuoG).